The chain runs to 563 residues: Eukaryotic translation initiation factor 3 subunit D (563 aa).

Positions 95–136 (PGYMRNRNRFNQRGGYRRDNRGGRFQGQGGNMGMQNLSRGRD) are disordered. Residues 294-308 (EFDLLTVGETANDLN) are RNA gate. A disordered region spans residues 528–563 (IPNSTFETDEEDDDDDEDDVENDDGDDEKDEGDGED). Residues 534-563 (ETDEEDDDDDEDDVENDDGDDEKDEGDGED) show a composition bias toward acidic residues.

Belongs to the eIF-3 subunit D family. As to quaternary structure, component of the eukaryotic translation initiation factor 3 (eIF-3) complex.

Its subcellular location is the cytoplasm. In terms of biological role, mRNA cap-binding component of the eukaryotic translation initiation factor 3 (eIF-3) complex, which is involved in protein synthesis of a specialized repertoire of mRNAs and, together with other initiation factors, stimulates binding of mRNA and methionyl-tRNAi to the 40S ribosome. The eIF-3 complex specifically targets and initiates translation of a subset of mRNAs involved in cell proliferation. In the eIF-3 complex, eif3d specifically recognizes and binds the 7-methylguanosine cap of a subset of mRNAs. In Nematostella vectensis (Starlet sea anemone), this protein is Eukaryotic translation initiation factor 3 subunit D.